The primary structure comprises 71 residues: Disintegrin halysin (71 aa).

One can recognise a Disintegrin domain in the interval 1–71 (EAGEECDCGS…ISAGCPRNPF (71 aa)). 6 disulfides stabilise this stretch: C6-C21, C8-C16, C15-C38, C29-C35, C34-C59, and C47-C66. The Cell attachment site motif lies at 51 to 53 (RGD).

It belongs to the venom metalloproteinase (M12B) family. P-II subfamily. P-IIa sub-subfamily. Monomer. As to expression, expressed by the venom gland.

It is found in the secreted. Inhibits fibrinogen interaction with platelets. Acts by binding to alpha-IIb/beta-3 (ITGA2B/ITGB3) on the platelet surface and inhibits aggregation induced by ADP, thrombin, platelet-activating factor and collagen. The polypeptide is Disintegrin halysin (Gloydius blomhoffii (Mamushi)).